Reading from the N-terminus, the 213-residue chain is High frequency lysogenization protein HflD (213 aa).

The stretch at 99 to 126 (LSSAKGALDTLGNRINGLQRQLEHFDLQ) forms a coiled coil.

Belongs to the HflD family. In terms of assembly, interacts with CII protein from phage lambda.

It localises to the cytoplasm. Its subcellular location is the cell inner membrane. Functionally, negative regulator of phage lambda lysogenization. Contributes to the degradation of the phage regulatory protein CII. Acts probably by holding CII on the membrane surface, away from the target promoters, but close to the FtsH protease. In Escherichia coli O157:H7, this protein is High frequency lysogenization protein HflD.